The following is a 96-amino-acid chain: Co-chaperonin GroES (96 aa).

Belongs to the GroES chaperonin family. In terms of assembly, heptamer of 7 subunits arranged in a ring. Interacts with the chaperonin GroEL.

The protein resides in the cytoplasm. In terms of biological role, together with the chaperonin GroEL, plays an essential role in assisting protein folding. The GroEL-GroES system forms a nano-cage that allows encapsulation of the non-native substrate proteins and provides a physical environment optimized to promote and accelerate protein folding. GroES binds to the apical surface of the GroEL ring, thereby capping the opening of the GroEL channel. This Dechloromonas aromatica (strain RCB) protein is Co-chaperonin GroES.